The following is a 484-amino-acid chain: EF-hand calcium-binding domain-containing protein 14 (484 aa).

Disordered stretches follow at residues 1 to 48 (MKKR…TDEE), 227 to 255 (GSMENNGSNQILPSPSPPSELDNKSHSES), and 313 to 395 (EQRT…FTSD). Positions 37–48 (PDSDSESSTDEE) are enriched in acidic residues. Polar residues-rich tracts occupy residues 228–239 (SMENNGSNQILP), 315–324 (RTNVSSSTME), and 335–347 (LVTNRSDTVQAQS). EF-hand domains are found at residues 423 to 452 (SSIKDLQDLFHKTGQDVDGMLTYQELWNSL) and 453 to 484 (GSAMPRPESLRAFDSNGDGRYSFLELRLALGI). Ca(2+) is bound by residues aspartate 466, asparagine 468, aspartate 470, arginine 472, and glutamate 477.

The polypeptide is EF-hand calcium-binding domain-containing protein 14 (Efcab14) (Mus musculus (Mouse)).